The primary structure comprises 363 residues: Flagellar P-ring protein (363 aa).

The first 20 residues, 1 to 20 (MKLKLFLLSVLLLVSGSSQA), serve as a signal peptide directing secretion.

Belongs to the FlgI family. The basal body constitutes a major portion of the flagellar organelle and consists of four rings (L,P,S, and M) mounted on a central rod.

The protein localises to the periplasm. It is found in the bacterial flagellum basal body. Its function is as follows. Assembles around the rod to form the L-ring and probably protects the motor/basal body from shearing forces during rotation. In Shewanella woodyi (strain ATCC 51908 / MS32), this protein is Flagellar P-ring protein.